The following is a 203-amino-acid chain: Recombination protein RecR (203 aa).

The segment at 57–72 (CARCNTFSETELCVLC) adopts a C4-type zinc-finger fold. The 96-residue stretch at 80–175 (DVLCVVEMPA…SVSRIARGLP (96 aa)) folds into the Toprim domain.

Belongs to the RecR family.

Its function is as follows. May play a role in DNA repair. It seems to be involved in an RecBC-independent recombinational process of DNA repair. It may act with RecF and RecO. The sequence is that of Recombination protein RecR from Laribacter hongkongensis (strain HLHK9).